Reading from the N-terminus, the 487-residue chain is Putative B3 domain-containing protein At1g78640 (487 aa).

2 DNA-binding regions (TF-B3) span residues Arg-171–Thr-269 and Arg-379–Val-474.

It is found in the nucleus. The protein is Putative B3 domain-containing protein At1g78640 of Arabidopsis thaliana (Mouse-ear cress).